The primary structure comprises 673 residues: Putative lipase atg15 (673 aa).

At 1 to 7 the chain is on the cytoplasmic side; sequence MPRKRSR. A helical; Signal-anchor for type II membrane protein transmembrane segment spans residues 8-28; sequence FELSIHSLLLSVAVLSGAAYA. Residues 29–673 lie on the Lumenal side of the membrane; the sequence is SGYYPPSQQV…AVTSAPTPTS (645 aa). Asn-156, Asn-191, Asn-213, Asn-271, and Asn-295 each carry an N-linked (GlcNAc...) asparagine glycan. Ser-311 (charge relay system) is an active-site residue. Residue Asn-457 is glycosylated (N-linked (GlcNAc...) asparagine).

Belongs to the AB hydrolase superfamily. Lipase family. Binds to both phosphatidylinositol (PI) and phosphatidylinositol 3,5-bisphosphate (PIP2).

Its subcellular location is the endosome. The protein localises to the multivesicular body membrane. It is found in the prevacuolar compartment membrane. It catalyses the reaction a triacylglycerol + H2O = a diacylglycerol + a fatty acid + H(+). In terms of biological role, lipase which is essential for lysis of subvacuolar cytoplasm to vacuole targeted bodies and intravacuolar autophagic bodies. Involved in the lysis of intravacuolar multivesicular body (MVB) vesicles. The intravacuolar membrane disintegration by atg15 is critical to life span extension. This chain is Putative lipase atg15 (atg15), found in Penicillium rubens (strain ATCC 28089 / DSM 1075 / NRRL 1951 / Wisconsin 54-1255) (Penicillium chrysogenum).